We begin with the raw amino-acid sequence, 332 residues long: MKQILYKLFEHQYLGRDEARTILQNIAQGKYNDVQVASLITVFLMRNISVEELCGFRDALLEMRVPVDLSEFAPIDIVGTGGDGKNTFNISTAACFTVAGAGIPVVKHGNYGATSVSGASNVMEQHGVKFTSDVDQMRRSMEQCNIAYLHAPLFNPALKAVAPIRKGLAVRTFFNMLGPLVNPVLPTYQLLGVYNLPLLRLYTYTYQESKTKFAVVHSLDGYDEISLTNEFKVATCGNEKIYTPEGLGFARYQDTDLDGGQTPEDAAKIFDNIMNNTATEAQKNVVVINAAFAIQVVRPEKTIEECIALAKESLESGRALATLKKFIELNNK.

5-phospho-alpha-D-ribose 1-diphosphate contacts are provided by residues G79, 82-83 (GD), T87, 89-92 (NIST), 107-115 (KHGNYGATS), and A119. Position 79 (G79) interacts with anthranilate. S91 provides a ligand contact to Mg(2+). Residue N110 participates in anthranilate binding. Residue R165 coordinates anthranilate. Residues D223 and E224 each contribute to the Mg(2+) site.

This sequence belongs to the anthranilate phosphoribosyltransferase family. In terms of assembly, homodimer. Requires Mg(2+) as cofactor.

The enzyme catalyses N-(5-phospho-beta-D-ribosyl)anthranilate + diphosphate = 5-phospho-alpha-D-ribose 1-diphosphate + anthranilate. Its pathway is amino-acid biosynthesis; L-tryptophan biosynthesis; L-tryptophan from chorismate: step 2/5. Catalyzes the transfer of the phosphoribosyl group of 5-phosphorylribose-1-pyrophosphate (PRPP) to anthranilate to yield N-(5'-phosphoribosyl)-anthranilate (PRA). The sequence is that of Anthranilate phosphoribosyltransferase from Bacteroides thetaiotaomicron (strain ATCC 29148 / DSM 2079 / JCM 5827 / CCUG 10774 / NCTC 10582 / VPI-5482 / E50).